Reading from the N-terminus, the 103-residue chain is Methane monooxygenase component D (103 aa).

The soluble methane monooxygenase (sMMO) consists of four components A/MMOH (composed of alpha/MmoX, beta/MmoY and gamma/MmoZ), B/MMOB (MmoB), C/MMOR (MmoC) and D/MMOD (MmoD).

The protein is Methane monooxygenase component D (mmoD) of Methylococcus capsulatus (strain ATCC 33009 / NCIMB 11132 / Bath).